We begin with the raw amino-acid sequence, 447 residues long: UPF0210 protein lhv_0606 (447 aa).

This sequence belongs to the UPF0210 family. Homodimer.

The protein is UPF0210 protein lhv_0606 of Lactobacillus helveticus (strain DPC 4571).